The following is a 337-amino-acid chain: Glyceraldehyde-3-phosphate dehydrogenase (337 aa).

Residues 11 to 12 (TV), 34 to 35 (TR), and glycine 110 contribute to the NADP(+) site. 139-141 (SCN) contacts D-glyceraldehyde 3-phosphate. Catalysis depends on cysteine 140, which acts as the Nucleophile. Position 171 (aspartate 171) interacts with NADP(+). Position 194–195 (194–195 (HG)) interacts with D-glyceraldehyde 3-phosphate. NADP(+) is bound at residue glutamine 300.

This sequence belongs to the glyceraldehyde-3-phosphate dehydrogenase family. Homotetramer.

Its subcellular location is the cytoplasm. It catalyses the reaction D-glyceraldehyde 3-phosphate + phosphate + NADP(+) = (2R)-3-phospho-glyceroyl phosphate + NADPH + H(+). The enzyme catalyses D-glyceraldehyde 3-phosphate + phosphate + NAD(+) = (2R)-3-phospho-glyceroyl phosphate + NADH + H(+). It participates in carbohydrate degradation; glycolysis; pyruvate from D-glyceraldehyde 3-phosphate: step 1/5. Its function is as follows. Exhibits a dual-cofactor specificity, with a marked preference for NADP(+) over NAD(+). This Methanothermus fervidus protein is Glyceraldehyde-3-phosphate dehydrogenase (gap).